The sequence spans 294 residues: MLNQTTAAQKAQTLAEALPYIKRFFDKTIVIKYGGNAMTDPHLKECFASDVVLLKLVGMNPVVVHGGGPQINELLDKLGKKGEFIQGMRVTDEETMDIVEMVLGGQVNKEIVNLINRNGGKAVGLTGQDGNFIHARKLLVQDLQNPSNMIDIGQVGEISGIDPSLIQFLDSGDFIPVIAPIGVGIDGQTYNINADVVAGKLAEVLGAEKLILLTNTPGVLDKTGQLLTGLTPKQIDDLVADGTLSGGMLPKISSALDAARSGVKSVHIIDGRVEHALLLEVLTDAGVGTLITAK.

Residues 67-68 (GG), Arg-89, and Asn-191 contribute to the substrate site.

This sequence belongs to the acetylglutamate kinase family. ArgB subfamily.

It is found in the cytoplasm. The enzyme catalyses N-acetyl-L-glutamate + ATP = N-acetyl-L-glutamyl 5-phosphate + ADP. It functions in the pathway amino-acid biosynthesis; L-arginine biosynthesis; N(2)-acetyl-L-ornithine from L-glutamate: step 2/4. Its function is as follows. Catalyzes the ATP-dependent phosphorylation of N-acetyl-L-glutamate. The sequence is that of Acetylglutamate kinase from Methylobacillus flagellatus (strain ATCC 51484 / DSM 6875 / VKM B-1610 / KT).